A 271-amino-acid chain; its full sequence is Putative glucose-6-phosphate 1-epimerase (271 aa).

Arg-71 and Arg-93 together coordinate substrate. Residue His-151 is part of the active site. Asp-193 contacts substrate. The active site involves Glu-249.

This sequence belongs to the glucose-6-phosphate 1-epimerase family.

The enzyme catalyses alpha-D-glucose 6-phosphate = beta-D-glucose 6-phosphate. The chain is Putative glucose-6-phosphate 1-epimerase from Haemophilus influenzae (strain ATCC 51907 / DSM 11121 / KW20 / Rd).